The sequence spans 106 residues: UPF0145 protein CTC_01500 (106 aa).

The protein belongs to the UPF0145 family.

The sequence is that of UPF0145 protein CTC_01500 from Clostridium tetani (strain Massachusetts / E88).